The primary structure comprises 662 residues: Fructose-1,6-bisphosphatase class 3 (662 aa).

It belongs to the FBPase class 3 family. Mn(2+) is required as a cofactor.

It carries out the reaction beta-D-fructose 1,6-bisphosphate + H2O = beta-D-fructose 6-phosphate + phosphate. Its pathway is carbohydrate biosynthesis; gluconeogenesis. The chain is Fructose-1,6-bisphosphatase class 3 from Clostridium tetani (strain Massachusetts / E88).